The sequence spans 504 residues: Cytoplasmic dynein 1 light intermediate chain 1 (504 aa).

An ATP-binding site is contributed by 35 to 42 (GDPTSGKS). 3 stretches are compositionally biased toward low complexity: residues 167–189 (TTTAATTTTTTTSNNIENNTNKT), 392–425 (NSPSTPSPLSQSSNNNNSNNNINNTSTPSINTPL), and 437–446 (SSNNPVAASP). Disordered stretches follow at residues 167–195 (TTTAATTTTTTTSNNIENNTNKTSPTTDK), 383–446 (LDND…AASP), and 464–504 (DKTS…QQKK). Basic and acidic residues predominate over residues 464 to 473 (DKTSSRKDLK). Residues 475–487 (SLASPPTTSVSSN) show a composition bias toward polar residues. Residues 488-504 (AREDAKKELDKLKQQKK) show a composition bias toward basic and acidic residues.

This sequence belongs to the dynein light intermediate chain family. As to quaternary structure, homodimer. The cytoplasmic dynein 1 complex consists of two catalytic heavy chains (HCs) and a number of non-catalytic subunits presented by intermediate chains (ICs), light intermediate chains (LICs) and light chains (LCs).

It is found in the cytoplasm. Its subcellular location is the cytoskeleton. Functionally, acts as one of several non-catalytic accessory components of the cytoplasmic dynein 1 complex that are thought to be involved in linking dynein to cargos and to adapter proteins that regulate dynein function. Cytoplasmic dynein 1 acts as a motor for the intracellular retrograde motility of vesicles and organelles along microtubules. May play a role in binding dynein to membranous organelles or chromosomes. This Dictyostelium discoideum (Social amoeba) protein is Cytoplasmic dynein 1 light intermediate chain 1 (dync1li1).